The primary structure comprises 176 residues: Cytochrome b (176 aa).

The next 3 membrane-spanning stretches (helical) occupy residues 33 to 53 (FGSLLGVCLMMQILTGLFLAM), 77 to 98 (WLLRYLHANGASMFFICLYLHI), and 113 to 133 (WNVGIILLFAVMATAFMGYVL). Residues His83 and His97 each coordinate heme b.

The protein belongs to the cytochrome b family. As to quaternary structure, the cytochrome bc1 complex contains 11 subunits: 3 respiratory subunits (MT-CYB, CYC1 and UQCRFS1), 2 core proteins (UQCRC1 and UQCRC2) and 6 low-molecular weight proteins (UQCRH/QCR6, UQCRB/QCR7, UQCRQ/QCR8, UQCR10/QCR9, UQCR11/QCR10 and a cleavage product of UQCRFS1). This cytochrome bc1 complex then forms a dimer. Heme b serves as cofactor.

The protein localises to the mitochondrion inner membrane. In terms of biological role, component of the ubiquinol-cytochrome c reductase complex (complex III or cytochrome b-c1 complex) that is part of the mitochondrial respiratory chain. The b-c1 complex mediates electron transfer from ubiquinol to cytochrome c. Contributes to the generation of a proton gradient across the mitochondrial membrane that is then used for ATP synthesis. The polypeptide is Cytochrome b (MT-CYB) (Promops centralis (Big crested mastiff bat)).